The sequence spans 359 residues: Phospho-N-acetylmuramoyl-pentapeptide-transferase (359 aa).

Helical transmembrane passes span 3–23 (QILI…PVLI), 55–75 (VAIL…GLAL), 84–104 (GLLV…DDLI), 120–140 (TVGI…FGNA), 156–176 (IATV…LVSA), 187–207 (LDGL…LITF), 231–251 (LALV…WNAA), 255–275 (IFMG…LSVT), 280–300 (ILAV…VVQI), and 334–354 (FWLL…GEWL).

Belongs to the glycosyltransferase 4 family. MraY subfamily. Mg(2+) serves as cofactor.

Its subcellular location is the cell membrane. The catalysed reaction is UDP-N-acetyl-alpha-D-muramoyl-L-alanyl-gamma-D-glutamyl-meso-2,6-diaminopimeloyl-D-alanyl-D-alanine + di-trans,octa-cis-undecaprenyl phosphate = di-trans,octa-cis-undecaprenyl diphospho-N-acetyl-alpha-D-muramoyl-L-alanyl-D-glutamyl-meso-2,6-diaminopimeloyl-D-alanyl-D-alanine + UMP. Its pathway is cell wall biogenesis; peptidoglycan biosynthesis. Functionally, catalyzes the initial step of the lipid cycle reactions in the biosynthesis of the cell wall peptidoglycan: transfers peptidoglycan precursor phospho-MurNAc-pentapeptide from UDP-MurNAc-pentapeptide onto the lipid carrier undecaprenyl phosphate, yielding undecaprenyl-pyrophosphoryl-MurNAc-pentapeptide, known as lipid I. The chain is Phospho-N-acetylmuramoyl-pentapeptide-transferase from Mycobacterium sp. (strain MCS).